We begin with the raw amino-acid sequence, 244 residues long: tRNA (guanine-N(1)-)-methyltransferase (244 aa).

Residues G120 and 140–145 each bind S-adenosyl-L-methionine; that span reads IGDYIL.

This sequence belongs to the RNA methyltransferase TrmD family. Homodimer.

The protein localises to the cytoplasm. The catalysed reaction is guanosine(37) in tRNA + S-adenosyl-L-methionine = N(1)-methylguanosine(37) in tRNA + S-adenosyl-L-homocysteine + H(+). In terms of biological role, specifically methylates guanosine-37 in various tRNAs. This is tRNA (guanine-N(1)-)-methyltransferase from Brucella abortus (strain S19).